A 321-amino-acid polypeptide reads, in one-letter code: ATP-dependent 6-phosphofructokinase (321 aa).

G11 serves as a coordination point for ATP. 21–25 (RAVVR) serves as a coordination point for ADP. Residues 72–73 (RC) and 102–105 (GDGS) each bind ATP. D103 lines the Mg(2+) pocket. Residue 126–128 (TID) participates in substrate binding. Residue D128 is the Proton acceptor of the active site. Residue R155 participates in ADP binding. Substrate is bound by residues R163 and 170–172 (MGR). Residues 186–188 (GAE), R212, and 214–216 (KLH) each bind ADP. Substrate contacts are provided by residues E223, R245, and 251 to 254 (HIQR).

The protein belongs to the phosphofructokinase type A (PFKA) family. ATP-dependent PFK group I subfamily. Prokaryotic clade 'B1' sub-subfamily. In terms of assembly, homotetramer. It depends on Mg(2+) as a cofactor.

Its subcellular location is the cytoplasm. It carries out the reaction beta-D-fructose 6-phosphate + ATP = beta-D-fructose 1,6-bisphosphate + ADP + H(+). The protein operates within carbohydrate degradation; glycolysis; D-glyceraldehyde 3-phosphate and glycerone phosphate from D-glucose: step 3/4. With respect to regulation, allosterically activated by ADP and other diphosphonucleosides, and allosterically inhibited by phosphoenolpyruvate. Functionally, catalyzes the phosphorylation of D-fructose 6-phosphate to fructose 1,6-bisphosphate by ATP, the first committing step of glycolysis. The protein is ATP-dependent 6-phosphofructokinase of Thermoanaerobacter pseudethanolicus (strain ATCC 33223 / 39E) (Clostridium thermohydrosulfuricum).